The chain runs to 186 residues: Acetyltransferase PA2578 (186 aa).

One can recognise an N-acetyltransferase domain in the interval 12-176; it reads LQLVPFQLGH…NVVLMGLLRQ (165 aa). Residues Q37, 97–99, G105, N137, and 142–144 each bind CoA; these read IVL and HLY.

Homodimer.

Functionally, catalyzes the transfer of an acetyl group from acetyl coenzyme A (AcCoA) to an acceptor substrate and releases both CoA and the acetylated product. It prefers the antibiotic chloramphenicol. The sequence is that of Acetyltransferase PA2578 from Pseudomonas aeruginosa (strain ATCC 15692 / DSM 22644 / CIP 104116 / JCM 14847 / LMG 12228 / 1C / PRS 101 / PAO1).